The sequence spans 125 residues: uncharacterized protein (125 aa).

The span at 1-33 shows a compositional bias: polar residues; the sequence is MLPHQNSSYTRQGTNDAQANDMRSPSQLPTSVN. Disordered stretches follow at residues 1–35 and 44–63; these read MLPH…VNIE and SEKL…KKHT. Basic residues predominate over residues 53–63; that stretch reads NRSRSGIKKHT.

This is an uncharacterized protein from Schizosaccharomyces pombe (strain 972 / ATCC 24843) (Fission yeast).